The sequence spans 353 residues: Chorismate synthase (353 aa).

Residues Arg-48 and Arg-54 each coordinate NADP(+). FMN is bound by residues 125–127, 238–239, Gly-278, 293–297, and Arg-319; these read RSS, NA, and KPTSS.

This sequence belongs to the chorismate synthase family. As to quaternary structure, homotetramer. FMNH2 is required as a cofactor.

The enzyme catalyses 5-O-(1-carboxyvinyl)-3-phosphoshikimate = chorismate + phosphate. The protein operates within metabolic intermediate biosynthesis; chorismate biosynthesis; chorismate from D-erythrose 4-phosphate and phosphoenolpyruvate: step 7/7. In terms of biological role, catalyzes the anti-1,4-elimination of the C-3 phosphate and the C-6 proR hydrogen from 5-enolpyruvylshikimate-3-phosphate (EPSP) to yield chorismate, which is the branch point compound that serves as the starting substrate for the three terminal pathways of aromatic amino acid biosynthesis. This reaction introduces a second double bond into the aromatic ring system. The polypeptide is Chorismate synthase (Buchnera aphidicola subsp. Schizaphis graminum (strain Sg)).